Here is a 186-residue protein sequence, read N- to C-terminus: Bifunctional protein PyrR (186 aa).

A PRPP-binding motif is present at residues 101–113; sequence VVLVDDVLYTGRT.

This sequence belongs to the purine/pyrimidine phosphoribosyltransferase family. PyrR subfamily.

The enzyme catalyses UMP + diphosphate = 5-phospho-alpha-D-ribose 1-diphosphate + uracil. Regulates the transcription of the pyrimidine nucleotide (pyr) operon in response to exogenous pyrimidines. Functionally, also displays a weak uracil phosphoribosyltransferase activity which is not physiologically significant. In Syntrophobacter fumaroxidans (strain DSM 10017 / MPOB), this protein is Bifunctional protein PyrR.